We begin with the raw amino-acid sequence, 667 residues long: Gamma-tubulin complex component 4 (667 aa).

The segment at 424–446 is disordered; it reads DHKADATQPREVPSRETSPREAP.

Belongs to the TUBGCP family. As to quaternary structure, component of the gamma-tubulin ring complex (gTuRC) consisting of TUBGCP2, TUBGCP3, TUBGCP4, TUBGCP5 and TUBGCP6 and gamma-tubulin TUBG1 or TUBG2. TUBGCP2, TUBGCP3, TUBGCP4, TUBGCP5 and TUBGCP6 assemble in a 5:5:2:1:1 stoichiometry; each is associated with a gamma-tubulin, thereby arranging 14 gamma-tubulins in a helical manner. Gamma-tubulin at the first position is blocked by TUBGCP3 at the last position, allowing 13 protafilaments to grow into a microtubule. The gTuRC (via TUBGCP3 and TUBGCP6) interacts with ACTB and MZT1; the interactions form a luminal bridge that stabilizes the initial structure during complex assembly. The gTuRC (via TUBGCP2) interacts with MZT2A/MZT2B and CDK5RAP2 (via CM1 motif); the interactions play a role in gTuRC activation. Interacts with NINL. Interacts with ATF5; the ATF5:PCNT:polyglutamylated tubulin (PGT) tripartite unites the mother centriole and the pericentriolar material (PCM) in the centrosome.

The protein localises to the cytoplasm. It is found in the cytoskeleton. The protein resides in the microtubule organizing center. It localises to the centrosome. In terms of biological role, component of the gamma-tubulin ring complex (gTuRC) which mediates microtubule nucleation. The gTuRC regulates the minus-end nucleation of alpha-beta tubulin heterodimers that grow into microtubule protafilaments, a critical step in centrosome duplication and spindle formation. In Mus musculus (Mouse), this protein is Gamma-tubulin complex component 4 (Tubgcp4).